The primary structure comprises 815 residues: Leucine--tRNA ligase (815 aa).

The short motif at 41–51 (PYPSGTLHVGH) is the 'HIGH' region element. The 'KMSKS' region signature appears at 576–580 (KMSKS). Residue lysine 579 coordinates ATP.

The protein belongs to the class-I aminoacyl-tRNA synthetase family.

Its subcellular location is the cytoplasm. The enzyme catalyses tRNA(Leu) + L-leucine + ATP = L-leucyl-tRNA(Leu) + AMP + diphosphate. This Pseudothermotoga lettingae (strain ATCC BAA-301 / DSM 14385 / NBRC 107922 / TMO) (Thermotoga lettingae) protein is Leucine--tRNA ligase.